The chain runs to 310 residues: Cysteine synthase (310 aa).

Position 44 is an N6-(pyridoxal phosphate)lysine (K44). Residues N74, 179 to 183 (GTGGT), and S267 contribute to the pyridoxal 5'-phosphate site.

It belongs to the cysteine synthase/cystathionine beta-synthase family. It depends on pyridoxal 5'-phosphate as a cofactor.

It catalyses the reaction O-acetyl-L-serine + hydrogen sulfide = L-cysteine + acetate. The protein operates within amino-acid biosynthesis; L-cysteine biosynthesis; L-cysteine from L-serine: step 2/2. This Neisseria meningitidis serogroup B (strain ATCC BAA-335 / MC58) protein is Cysteine synthase (cysK).